The following is a 332-amino-acid chain: Fructose-1,6-bisphosphatase class 1 (332 aa).

Glu-89, Asp-110, Leu-112, and Asp-113 together coordinate Mg(2+). Residues 113–116, Asn-206, Tyr-239, 257–259, and Lys-269 contribute to the substrate site; these read DGSS and YLY. Glu-275 lines the Mg(2+) pocket.

It belongs to the FBPase class 1 family. Homotetramer. Mg(2+) serves as cofactor.

It localises to the cytoplasm. The enzyme catalyses beta-D-fructose 1,6-bisphosphate + H2O = beta-D-fructose 6-phosphate + phosphate. It participates in carbohydrate biosynthesis; gluconeogenesis. This Salmonella typhimurium (strain LT2 / SGSC1412 / ATCC 700720) protein is Fructose-1,6-bisphosphatase class 1.